Here is a 174-residue protein sequence, read N- to C-terminus: ATP synthase subunit b (174 aa).

Residues 9 to 29 traverse the membrane as a helical segment; the sequence is LPNTSLIFWEVVTFLILLALL.

The protein belongs to the ATPase B chain family. As to quaternary structure, F-type ATPases have 2 components, F(1) - the catalytic core - and F(0) - the membrane proton channel. F(1) has five subunits: alpha(3), beta(3), gamma(1), delta(1), epsilon(1). F(0) has three main subunits: a(1), b(2) and c(10-14). The alpha and beta chains form an alternating ring which encloses part of the gamma chain. F(1) is attached to F(0) by a central stalk formed by the gamma and epsilon chains, while a peripheral stalk is formed by the delta and b chains.

The protein localises to the cell membrane. F(1)F(0) ATP synthase produces ATP from ADP in the presence of a proton or sodium gradient. F-type ATPases consist of two structural domains, F(1) containing the extramembraneous catalytic core and F(0) containing the membrane proton channel, linked together by a central stalk and a peripheral stalk. During catalysis, ATP synthesis in the catalytic domain of F(1) is coupled via a rotary mechanism of the central stalk subunits to proton translocation. In terms of biological role, component of the F(0) channel, it forms part of the peripheral stalk, linking F(1) to F(0). This is ATP synthase subunit b from Rubrobacter xylanophilus (strain DSM 9941 / JCM 11954 / NBRC 16129 / PRD-1).